The chain runs to 512 residues: ATP synthase subunit alpha (512 aa).

Residue 169–176 (GDRQTGKT) participates in ATP binding.

Belongs to the ATPase alpha/beta chains family. As to quaternary structure, F-type ATPases have 2 components, CF(1) - the catalytic core - and CF(0) - the membrane proton channel. CF(1) has five subunits: alpha(3), beta(3), gamma(1), delta(1), epsilon(1). CF(0) has three main subunits: a(1), b(2) and c(9-12). The alpha and beta chains form an alternating ring which encloses part of the gamma chain. CF(1) is attached to CF(0) by a central stalk formed by the gamma and epsilon chains, while a peripheral stalk is formed by the delta and b chains.

It is found in the cell inner membrane. It catalyses the reaction ATP + H2O + 4 H(+)(in) = ADP + phosphate + 5 H(+)(out). In terms of biological role, produces ATP from ADP in the presence of a proton gradient across the membrane. The alpha chain is a regulatory subunit. The chain is ATP synthase subunit alpha from Leptothrix cholodnii (strain ATCC 51168 / LMG 8142 / SP-6) (Leptothrix discophora (strain SP-6)).